A 311-amino-acid chain; its full sequence is Inositol oxygenase 1 (311 aa).

Positions 1–11 (MTILIDRHSDQ) are enriched in basic and acidic residues. Positions 1 to 29 (MTILIDRHSDQNDAGDEIVEKNQGNGKEE) are disordered. Substrate-binding positions include Arg52 and 109–111 (DES). His122, His147, and Asp148 together coordinate Fe cation. Substrate contacts are provided by residues Lys151 and 168–169 (GD). Fe cation-binding residues include His220, His246, and Asp279. 246-247 (HS) is a binding site for substrate.

This sequence belongs to the myo-inositol oxygenase family. Requires Fe cation as cofactor. As to expression, expressed in roots, young leaves, stems, flowers and siliques.

The protein localises to the cytoplasm. The enzyme catalyses myo-inositol + O2 = D-glucuronate + H2O + H(+). The protein operates within polyol metabolism; myo-inositol degradation into D-glucuronate; D-glucuronate from myo-inositol: step 1/1. Catalyzes the oxygenative cleavage of myo-inositol to D-glucuronate. Involved in the biosynthesis of UDP-glucuronic acid (UDP-GlcA), providing nucleotide sugars for cell-wall polymers. May be also involved in plant ascorbate biosynthesis. The protein is Inositol oxygenase 1 (MIOX1) of Arabidopsis thaliana (Mouse-ear cress).